We begin with the raw amino-acid sequence, 310 residues long: UPF0324 membrane protein GSU2818 (310 aa).

A run of 9 helical transmembrane segments spans residues phenylalanine 11 to isoleucine 33, methionine 53 to isoleucine 72, isoleucine 79 to glycine 97, serine 107 to leucine 129, threonine 136 to glycine 158, alanine 193 to alanine 215, isoleucine 227 to leucine 244, leucine 254 to leucine 273, and leucine 286 to tryptophan 308.

The protein belongs to the UPF0324 family.

The protein localises to the cell membrane. The chain is UPF0324 membrane protein GSU2818 from Geobacter sulfurreducens (strain ATCC 51573 / DSM 12127 / PCA).